A 1000-amino-acid polypeptide reads, in one-letter code: Vacuolar sorting protein 39 (1000 aa).

The CNH domain occupies 16–282; the sequence is PARIDAVESY…RRLVKSNNAV (267 aa). The segment at 394–413 is disordered; sequence DEASLSRGSSGISDDMESSS. The CHCR repeat unit spans residues 607–796; it reads YSMLVLESCP…YLNPKKSAKD (190 aa). The tract at residues 844–864 is disordered; the sequence is GLSSSTDSGRSDVDTEEPLEE.

It belongs to the VAM6/VPS39 family. As to quaternary structure, homooligomer. Component of the homotypic fusion and vacuole protein sorting (HOPS) complex composed of the class C Vps core proteins VPS11, VCL1, VPS18 and VPS33, which in HOPS further associates with VPS39 and VPS41. Interacts directly with VPS11. Binds to RABG3B.

It is found in the cytoplasm. Its subcellular location is the vacuole membrane. Functionally, essential protein required during embryogenesis. Believed to act in part as a component of the putative HOPS endosomal tethering complex. HOPS is required for the central vacuole formation. May play a role in clustering and fusion of late endosomes and lysosomes. Plays a role in vesicle-mediated protein trafficking to lysosomal compartments including the endocytic membrane transport and autophagic pathways. Required for fusion of endosomes and autophagosomes with lysosomes. In Arabidopsis thaliana (Mouse-ear cress), this protein is Vacuolar sorting protein 39.